The sequence spans 498 residues: Envelope glycoprotein G (498 aa).

A signal peptide spans 1 to 20 (MKWATWILALGLLVVRTVVA). Residues Asn56, Asn86, Asn142, and Asn226 are each glycosylated (N-linked (GlcNAc...) asparagine; by host). Repeat copies occupy residues 271 to 292 (EEEA…VGSP) and 308 to 329 (EEDE…VGSP). Residues 271-329 (EEEAELTSSDLDNIEIEVVGSPAAPAEGPATEEGRGAEEDEELTSSDLDNIEIEVVGSP) form a 2 X 22 AA repeats of E-E-[DE]-[AE]-E-L-T-S-S-D-L-D-N-I-E-I-E-V-V-G-S-P region. The disordered stretch occupies residues 290 to 377 (GSPAAPAEGP…HRLPPEPTFV (88 aa)). Residues 292 to 301 (PAAPAEGPAT) show a composition bias toward low complexity. The span at 308–322 (EEDEELTSSDLDNIE) shows a compositional bias: acidic residues. The span at 329 to 342 (PRPPASSPPPPPPR) shows a compositional bias: pro residues. Basic and acidic residues predominate over residues 346 to 364 (RGRDHDHDHGHHRADDRGP). Asn443 carries an N-linked (GlcNAc...) asparagine; by host glycan. Residues 463 to 483 (VALAGLVVVGIVIMCLHMAII) traverse the membrane as a helical segment.

The protein belongs to the alphaherpesvirinae glycoprotein G family.

It is found in the virion membrane. Its function is as follows. Chemokine-binding protein that inhibits neutrophils' chemotaxis. The protein is Envelope glycoprotein G (gG) of Sus scrofa (Pig).